A 156-amino-acid polypeptide reads, in one-letter code: Large ribosomal subunit protein uL15 (156 aa).

Residues 26 to 46 (GIGCGKGKTSGRGHKGQKARS) are disordered. The span at 34–43 (TSGRGHKGQK) shows a compositional bias: basic residues.

It belongs to the universal ribosomal protein uL15 family. As to quaternary structure, part of the 50S ribosomal subunit.

Functionally, binds to the 23S rRNA. This is Large ribosomal subunit protein uL15 from Ehrlichia canis (strain Jake).